A 947-amino-acid chain; its full sequence is Protein NETWORKED 2D (947 aa).

The NAB domain occupies 10–90; that stretch reads YSWWWASHIR…ERYDHISTEL (81 aa). 3 coiled-coil regions span residues 176-205, 247-342, and 375-433; these read KPEA…SSYE, MTET…HFES, and TALI…VLDK. Disordered regions lie at residues 455–555 and 580–620; these read NLHE…DKTD and EKQG…GEPD. A compositionally biased stretch (basic and acidic residues) spans 474–514; the sequence is PQKDLEGEKRTLDISEEIKEHQKETGEEKKEAPVKSVKFEQ. Over residues 525–536 the composition is skewed to polar residues; sequence TIPSTNPDTVLE. Composition is skewed to basic and acidic residues over residues 537–555, 580–589, and 610–620; these read STEK…DKTD, EKQGESDKID, and EDQKEKEGEPD. Coiled coils occupy residues 645-684 and 744-773; these read RNFK…LLQK and GQIQ…DGSS.

The protein belongs to the NET family.

Functionally, plant-specific actin binding protein. May be part of a membrane-cytoskeletal adapter complex. The protein is Protein NETWORKED 2D of Arabidopsis thaliana (Mouse-ear cress).